A 352-amino-acid polypeptide reads, in one-letter code: MVFRIASSPYTHNQRQTSRIMLLVVIAALPGIAAQTWFFGWGTLFQIVLAAITALVAEAIVLRLRKQSVASHLQDYSALLTGLLLAVSIPPLAPWWMVVLGTGFAIIIAKQLYGGLGQNPFNPAMIGYVVLLISFPVQMTSWLPPYEIAATTPDMLDTLRMIFSGHTASGGDMTLLRIGIDGISQATPLDTFKTSLRAGHSVEQIMQYPIYSGALAGVGWQWVNLAWLVGGVFLLWQKAIRWHIPVSFLLTLALCAALGWLFSPATLASPQLHLLSGATMLGAFFILTDPVTASTTNHGRLIFGALAGVLVWLIRSFGGYPDGVAFAVLLANITVPLIDYYTRPRVYGHRKG.

Transmembrane regions (helical) follow at residues 20–40 (IMLL…WFFG), 42–62 (GTLF…AIVL), 69–91 (VASH…SIPP), and 123–143 (PAMI…TSWL). Residue Thr187 is modified to FMN phosphoryl threonine. The next 5 helical transmembrane spans lie at 215 to 235 (LAGV…VFLL), 242 to 262 (WHIP…GWLF), 267 to 287 (LASP…FFIL), 301 to 321 (LIFG…GGYP), and 322 to 342 (DGVA…DYYT).

The protein belongs to the NqrB/RnfD family. As to quaternary structure, the complex is composed of six subunits: RsxA, RsxB, RsxC, RsxD, RsxE and RsxG. Requires FMN as cofactor.

It localises to the cell inner membrane. In terms of biological role, part of a membrane-bound complex that couples electron transfer with translocation of ions across the membrane. Required to maintain the reduced state of SoxR. The sequence is that of Ion-translocating oxidoreductase complex subunit D from Salmonella enteritidis PT4 (strain P125109).